Here is a 310-residue protein sequence, read N- to C-terminus: Glutamyl-Q tRNA(Asp) synthetase (310 aa).

Residues 8 to 12 (RFAPS) and glutamate 44 contribute to the L-glutamate site. The 'HIGH' region motif lies at 11–21 (PSPTGPLHLGS). Zn(2+)-binding residues include cysteine 100, cysteine 102, tyrosine 123, and cysteine 127. The L-glutamate site is built by tyrosine 183 and arginine 201. Positions 239-243 (KLSKQ) match the 'KMSKS' region motif. Lysine 242 provides a ligand contact to ATP.

This sequence belongs to the class-I aminoacyl-tRNA synthetase family. GluQ subfamily. Zn(2+) serves as cofactor.

Catalyzes the tRNA-independent activation of glutamate in presence of ATP and the subsequent transfer of glutamate onto a tRNA(Asp). Glutamate is transferred on the 2-amino-5-(4,5-dihydroxy-2-cyclopenten-1-yl) moiety of the queuosine in the wobble position of the QUC anticodon. The sequence is that of Glutamyl-Q tRNA(Asp) synthetase from Cupriavidus metallidurans (strain ATCC 43123 / DSM 2839 / NBRC 102507 / CH34) (Ralstonia metallidurans).